The primary structure comprises 422 residues: Adenylosuccinate synthetase (422 aa).

GTP is bound by residues 12-18 (GDEGKGK) and 40-42 (GHT). Asp13 functions as the Proton acceptor in the catalytic mechanism. Asp13 and Gly40 together coordinate Mg(2+). Residues 13-16 (DEGK), 38-41 (NAGH), Thr129, Arg143, Asn221, Thr236, and Arg300 contribute to the IMP site. The Proton donor role is filled by His41. 296 to 302 (VTTGRKR) provides a ligand contact to substrate. GTP is bound by residues Arg302, 328–330 (KLD), and 410–412 (GVG).

This sequence belongs to the adenylosuccinate synthetase family. In terms of assembly, homodimer. Mg(2+) serves as cofactor.

Its subcellular location is the cytoplasm. The catalysed reaction is IMP + L-aspartate + GTP = N(6)-(1,2-dicarboxyethyl)-AMP + GDP + phosphate + 2 H(+). It participates in purine metabolism; AMP biosynthesis via de novo pathway; AMP from IMP: step 1/2. Plays an important role in the de novo pathway and in the salvage pathway of purine nucleotide biosynthesis. Catalyzes the first committed step in the biosynthesis of AMP from IMP. This is Adenylosuccinate synthetase from Pyrenophora tritici-repentis (strain Pt-1C-BFP) (Wheat tan spot fungus).